We begin with the raw amino-acid sequence, 231 residues long: Ribonuclease 3 (231 aa).

The RNase III domain maps to 8-135 (VGDLERRIGH…LMAALYQDGG (128 aa)). Glu-48 serves as a coordination point for Mg(2+). Residues Asp-52 and Glu-124 contribute to the active site. Mg(2+) is bound at residue Glu-124. Residues 161-230 (DPKTALQEWA…AKALLEREGA (70 aa)) form the DRBM domain. A disordered region spans residues 210-231 (GKSRQEAEKAAAKALLEREGAG). Positions 212-231 (SRQEAEKAAAKALLEREGAG) are enriched in basic and acidic residues.

The protein belongs to the ribonuclease III family. In terms of assembly, homodimer. Requires Mg(2+) as cofactor.

The protein localises to the cytoplasm. It catalyses the reaction Endonucleolytic cleavage to 5'-phosphomonoester.. Its function is as follows. Digests double-stranded RNA. Involved in the processing of primary rRNA transcript to yield the immediate precursors to the large and small rRNAs (23S and 16S). Processes some mRNAs, and tRNAs when they are encoded in the rRNA operon. Processes pre-crRNA and tracrRNA of type II CRISPR loci if present in the organism. The protein is Ribonuclease 3 of Caulobacter vibrioides (strain ATCC 19089 / CIP 103742 / CB 15) (Caulobacter crescentus).